A 95-amino-acid chain; its full sequence is Late cornified envelope protein 7A (95 aa).

The protein belongs to the LCE family.

In terms of biological role, precursors of the cornified envelope of the stratum corneum. The chain is Late cornified envelope protein 7A from Homo sapiens (Human).